Reading from the N-terminus, the 222-residue chain is Chromatin-associated protein SWI6 (222 aa).

The segment covering 1–15 (MPVIKKEELSQKKDL) has biased composition (basic and acidic residues). Disordered regions lie at residues 1–26 (MPVI…GLED) and 77–147 (ETQD…DRQY). Residues 16–26 (ESEEEDSGLED) are compositionally biased toward acidic residues. A Chromo domain is found at 28–87 (YEVEKVIKHRGKGKNIEFLVRWKGYGPEYDTWEPTENVASAEEAVAAYWETQDKTATAPR).

In terms of assembly, interacts with DMT5.

It is found in the nucleus. Recognizes and binds histone H3 tails methylated at 'Lys-9', leading to epigenetic repression. Localizes DMT5 to heterochromatin characterized by trimethylation of histone H3 tails at 'Lys-9'. The protein is Chromatin-associated protein SWI6 of Cryptococcus neoformans var. grubii serotype A (strain H99 / ATCC 208821 / CBS 10515 / FGSC 9487) (Filobasidiella neoformans var. grubii).